A 207-amino-acid polypeptide reads, in one-letter code: Small ribosomal subunit protein uS10m (207 aa).

The N-terminal 14 residues, 1 to 14 (MNMFRQAVRSFVRY), are a transit peptide targeting the mitochondrion.

It belongs to the universal ribosomal protein uS10 family. Part of the mitochondrial small ribosomal subunit.

It is found in the mitochondrion. In terms of biological role, involved in mitochondrial genome encoded proteins translation. Involved in the binding of tRNA to the ribosomes. In Kluyveromyces lactis (strain ATCC 8585 / CBS 2359 / DSM 70799 / NBRC 1267 / NRRL Y-1140 / WM37) (Yeast), this protein is Small ribosomal subunit protein uS10m (RSM10).